A 410-amino-acid chain; its full sequence is uncharacterized protein (410 aa).

Position 87 (H87) interacts with Zn(2+). Residue D89 is part of the active site. D120 contributes to the Zn(2+) binding site. E154 (proton acceptor) is an active-site residue. Residues E155, D184, and H387 each contribute to the Zn(2+) site.

The protein belongs to the peptidase M20A family. Zn(2+) serves as cofactor. It depends on Co(2+) as a cofactor.

This is an uncharacterized protein from Methanocaldococcus jannaschii (strain ATCC 43067 / DSM 2661 / JAL-1 / JCM 10045 / NBRC 100440) (Methanococcus jannaschii).